Reading from the N-terminus, the 58-residue chain is Light-harvesting protein B-875 alpha chain (58 aa).

The Cytoplasmic segment spans residues 1 to 15 (MSKFYKIWMIFDPRR). A helical transmembrane segment spans residues 16–36 (VFVAQGVFLFLLAVMIHLILL). His-32 contributes to the a bacteriochlorophyll binding site. The Periplasmic segment spans residues 37–58 (STPSYNWLEISAAKYNRVAVAE).

It belongs to the antenna complex alpha subunit family. The core complex is formed by different alpha and beta chains, binding bacteriochlorophyll molecules, and arranged most probably in tetrameric structures disposed around the reaction center. The non-pigmented gamma chains may constitute additional components.

Its subcellular location is the cell inner membrane. Functionally, antenna complexes are light-harvesting systems, which transfer the excitation energy to the reaction centers. The chain is Light-harvesting protein B-875 alpha chain (pufA) from Cereibacter sphaeroides (strain ATCC 17023 / DSM 158 / JCM 6121 / CCUG 31486 / LMG 2827 / NBRC 12203 / NCIMB 8253 / ATH 2.4.1.) (Rhodobacter sphaeroides).